We begin with the raw amino-acid sequence, 348 residues long: Protein RecA (348 aa).

Gly64–Thr71 contacts ATP. The segment covering Glu326 to Leu335 has biased composition (basic and acidic residues). Residues Glu326–Glu348 form a disordered region. Positions Asp336–Glu348 are enriched in acidic residues.

Belongs to the RecA family.

The protein localises to the cytoplasm. Its function is as follows. Can catalyze the hydrolysis of ATP in the presence of single-stranded DNA, the ATP-dependent uptake of single-stranded DNA by duplex DNA, and the ATP-dependent hybridization of homologous single-stranded DNAs. It interacts with LexA causing its activation and leading to its autocatalytic cleavage. The sequence is that of Protein RecA from Listeria innocua serovar 6a (strain ATCC BAA-680 / CLIP 11262).